The following is a 486-amino-acid chain: CUGBP Elav-like family member 1 (486 aa).

M1 is subject to N-acetylmethionine. T4 carries the post-translational modification Phosphothreonine. RRM domains follow at residues 16–99 (IKMF…PADS) and 108–188 (RKLF…FADT). Residue K109 forms a Glycyl lysine isopeptide (Lys-Gly) (interchain with G-Cter in SUMO2) linkage. 2 positions are modified to phosphoserine: S179 and S302. Positions 277 to 309 (TPSGTNALTTSSSPLSVLTSSGSSPSSSSSNSV) are disordered. Residues 284–309 (LTTSSSPLSVLTSSGSSPSSSSSNSV) show a composition bias toward low complexity. One can recognise an RRM 3 domain in the interval 401 to 479 (ANLFIYHLPQ…KRLKVQLKRS (79 aa)).

This sequence belongs to the CELF/BRUNOL family. Component of an EIF2 complex at least composed of CELF1/CUGBP1, CALR, CALR3, EIF2S1, EIF2S2, HSP90B1 and HSPA5. Associates with polysomes. Interacts with HNRNPH1; the interaction in RNA-dependent. Interacts with PARN. In terms of processing, phosphorylated. Its phosphorylation status increases in senescent cells. Ubiquitous.

Its subcellular location is the nucleus. It localises to the cytoplasm. Its function is as follows. RNA-binding protein implicated in the regulation of several post-transcriptional events. Involved in pre-mRNA alternative splicing, mRNA translation and stability. Mediates exon inclusion and/or exclusion in pre-mRNA that are subject to tissue-specific and developmentally regulated alternative splicing. Specifically activates exon 5 inclusion of cardiac isoforms of TNNT2 during heart remodeling at the juvenile to adult transition. Acts both as an activator and as a repressor of a pair of coregulated exons: promotes inclusion of the smooth muscle (SM) exon but exclusion of the non-muscle (NM) exon in actinin pre-mRNAs. Activates SM exon 5 inclusion by antagonizing the repressive effect of PTB. Promotes exclusion of exon 11 of the INSR pre-mRNA. Inhibits, together with HNRNPH1, insulin receptor (IR) pre-mRNA exon 11 inclusion in myoblast. Increases translation and controls the choice of translation initiation codon of CEBPB mRNA. Increases mRNA translation of CEBPB in aging liver. Increases translation of CDKN1A mRNA by antagonizing the repressive effect of CALR3. Mediates rapid cytoplasmic mRNA deadenylation. Recruits the deadenylase PARN to the poly(A) tail of EDEN-containing mRNAs to promote their deadenylation. Required for completion of spermatogenesis. Binds to (CUG)n triplet repeats in the 3'-UTR of transcripts such as DMPK and to Bruno response elements (BREs). Binds to muscle-specific splicing enhancer (MSE) intronic sites flanking the alternative exon 5 of TNNT2 pre-mRNA. Binds to AU-rich sequences (AREs or EDEN-like) localized in the 3'-UTR of JUN and FOS mRNAs. Binds to the IR RNA. Binds to the 5'-region of CDKN1A and CEBPB mRNAs. Binds with the 5'-region of CEBPB mRNA in aging liver. May be a specific regulator of miRNA biogenesis. Binds to primary microRNA pri-MIR140 and, with CELF2, negatively regulates the processing to mature miRNA. This chain is CUGBP Elav-like family member 1 (CELF1), found in Homo sapiens (Human).